Consider the following 63-residue polypeptide: MGSFSMWHWLIVLVIVLLLFGRGKIPELMGDVAKGIKSFKKGMTDDDAPDTAKTVDHKADETK.

A helical transmembrane segment spans residues 1–21; that stretch reads MGSFSMWHWLIVLVIVLLLFG. The disordered stretch occupies residues 42 to 63; the sequence is GMTDDDAPDTAKTVDHKADETK. The segment covering 53 to 63 has biased composition (basic and acidic residues); it reads KTVDHKADETK.

It belongs to the TatA/E family. As to quaternary structure, the Tat system comprises two distinct complexes: a TatABC complex, containing multiple copies of TatA, TatB and TatC subunits, and a separate TatA complex, containing only TatA subunits. Substrates initially bind to the TatABC complex, which probably triggers association of the separate TatA complex to form the active translocon.

The protein resides in the cell inner membrane. Its function is as follows. Part of the twin-arginine translocation (Tat) system that transports large folded proteins containing a characteristic twin-arginine motif in their signal peptide across membranes. TatA could form the protein-conducting channel of the Tat system. The polypeptide is Sec-independent protein translocase protein TatA (Rhizobium etli (strain CIAT 652)).